The sequence spans 222 residues: MALFGFGKKLALPTPEKALPGRAQIMPVPANHYVNKNPLKPPFPDGFEKALFGLGCFWGAERKFWQQQGVYSTAVGYAAGFTPNPTYDEVCTGLTGHNEVVLVVFDPKVISYTQLLKVFWESHNPTQGMRQGNDVGTQYRSGIYVYSEAQKQLAEASRDAYQQALSSAGYEKITTEILDAPEFYYAEAYHQQYLAKNPNGYCGLGGTNVACPVGVFESSANG.

Residue cysteine 56 is part of the active site.

This sequence belongs to the MsrA Met sulfoxide reductase family.

The enzyme catalyses L-methionyl-[protein] + [thioredoxin]-disulfide + H2O = L-methionyl-(S)-S-oxide-[protein] + [thioredoxin]-dithiol. The catalysed reaction is [thioredoxin]-disulfide + L-methionine + H2O = L-methionine (S)-S-oxide + [thioredoxin]-dithiol. In terms of biological role, has an important function as a repair enzyme for proteins that have been inactivated by oxidation. Catalyzes the reversible oxidation-reduction of methionine sulfoxide in proteins to methionine. The chain is Peptide methionine sulfoxide reductase MsrA 2 (msrA2) from Nostoc sp. (strain PCC 7120 / SAG 25.82 / UTEX 2576).